We begin with the raw amino-acid sequence, 37 residues long: Conotoxin Bt1.8 (37 aa).

A propeptide spanning residues 1–20 is cleaved from the precursor; that stretch reads PDGRNAAAKAFDLITPTVRK. 2 disulfides stabilise this stretch: Cys-22/Cys-28 and Cys-23/Cys-36. Position 36 is a cysteine amide (Cys-36).

Belongs to the conotoxin A superfamily. In terms of tissue distribution, expressed by the venom duct.

It localises to the secreted. Functionally, alpha-conotoxins bind to the nicotinic acetylcholine receptors (nAChR) and inhibit them. This toxin inhibits mammalian alpha-3-beta-2/CHRNA3-CHRNB2 nAChR (IC(50)=9.4 nM (rat), IC(50)=8.8 nM (human)), as well as the subunit chimera alpha-6/alpha-3-beta-2-beta-3 nAChR (CHRNA6/CHRNA3-CHRNB2-CHRNB3)(IC(50)=2.1 nM (rat), IC(50)=1.7 nM (human)). Binds to rat alpha-6/alpha-3-beta-2-beta-3 more rapidly than to alpha-3-beta-2, and dissociates more rapidly from alpha-3-beta-2 than from alpha-6/alpha-3-beta-2-beta-3. The chain is Conotoxin Bt1.8 from Conus betulinus (Beech cone).